Here is a 166-residue protein sequence, read N- to C-terminus: Putative methyltransferase Rv1506c (166 aa).

The protein belongs to the methyltransferase superfamily.

In terms of biological role, probably plays a role in host phagosome maturation arrest, as well as a role in the synthesis of acyltrehalose-containing glycolipids. This is Putative methyltransferase Rv1506c from Mycobacterium tuberculosis (strain ATCC 25618 / H37Rv).